Here is a 192-residue protein sequence, read N- to C-terminus: Probable apo-citrate lyase phosphoribosyl-dephospho-CoA transferase (192 aa).

The protein belongs to the CitX family.

The catalysed reaction is apo-[citrate lyase ACP] + 2'-(5''-triphospho-alpha-D-ribosyl)-3'-dephospho-CoA = holo-[citrate lyase ACP] + diphosphate. Transfers 2-(5''-triphosphoribosyl)-3'-dephosphocoenzyme-A on a serine residue to the apo-acyl carrier protein (gamma chain) of the citrate lyase to yield holo-acyl carrier protein. The sequence is that of Probable apo-citrate lyase phosphoribosyl-dephospho-CoA transferase from Streptococcus pyogenes serotype M3 (strain ATCC BAA-595 / MGAS315).